We begin with the raw amino-acid sequence, 331 residues long: Centriolar satellite-associated tubulin polyglutamylase complex regulator 1 (331 aa).

Residues 1-111 (MLSPERLALP…HCLLQLLCPD (111 aa)) are required for interaction with PCM1. The required for interaction with TPGS1, LRRC49, and TTLL1 stretch occupies residues 1-225 (MLSPERLALP…SCPPPALVKE (225 aa)). Residues 112 to 331 (FPLELTQKAA…STEETDESET (220 aa)) form a required for interaction with TPGS2 region. The tract at residues 288 to 331 (SPEASCLPSRTPPRVGSPWRPLHHSRKVDGESDGSTEETDESET) is disordered. The span at 318 to 331 (ESDGSTEETDESET) shows a compositional bias: acidic residues. Ser319 carries the phosphoserine modification.

The protein belongs to the CSTPP1 family. Interacts with PCM1. Interacts with TTLL1, TPGS1, TPGS2 and LRRC49; the interactions link CSTPP1 to the complex TPGC. Binds to alpha-tubulin.

Its subcellular location is the cytoplasm. It is found in the cytoskeleton. The protein resides in the microtubule organizing center. The protein localises to the centrosome. It localises to the centriolar satellite. Regulator of the tubulin polyglutamylase complex (TPGC) that controls cytoskeletal organization, nuclear shape, and cilium disassembly by balancing microtubule and actin assembly. Regulates the assembly and stability of the TPGC and thereby modulates polyglutamylation of the microtubule, which antagonizes MAP4 binding. This chain is Centriolar satellite-associated tubulin polyglutamylase complex regulator 1, found in Homo sapiens (Human).